The following is a 445-amino-acid chain: Transcription termination factor MTERF15, mitochondrial (445 aa).

A mitochondrion-targeting transit peptide spans 1 to 25 (MASKLKTFINLRDYPITLFNQIRSL).

This sequence belongs to the mTERF family.

The protein resides in the mitochondrion. In terms of biological role, transcription termination factor required for mitochondrial NAD2 intron 3 splicing and normal membrane respiratory chain Complex I activity. Essential for normal plant growth and development. Binds to RNA but not to double-stranded DNA. The polypeptide is Transcription termination factor MTERF15, mitochondrial (Arabidopsis thaliana (Mouse-ear cress)).